A 469-amino-acid chain; its full sequence is MPIRALCTICSDFFDHSRDVAAIHCGHTFHLQCLIQWFETAPSRTCPQCRIQVGKRTIINKLFFDLAQEEENVLDAEFLKNELDNVRAQLSQKDKEKRDSQVIIDTLRDTLEERNATVVSLQQALGKAEMLCSTLKKQMKYLEQQQDETKQAQEEARRLRSKMKTMEQIELLLQSQRPEVEEMIRDMGVGQSAVEQLAVYCVSLKKEYENLKEARKASGEVADKLRKDLFSSRSKLQTVYSELDQAKLELKSAQKDLQSADKEIMSLKKKLTMLQETLNLPPVASETVDRLVLESPAPVEVNLKLRRPSFRDDIDLNATFDVDTPPARPSSSQHGYYEKLCLEKSHSPIQDVPKKICKGPRKESQLSLGGQSCAGEPDEELVGAFPIFVRNAILGQKQPKRPRSESSCSKDVVRTGFDGLGGRTKFIQPTDTVMIRPLPVKPKTKVKQRVRVKTVPSLFQAKLDTFLWS.

An RING-type zinc finger spans residues 7–50 (CTICSDFFDHSRDVAAIHCGHTFHLQCLIQWFETAPSRTCPQCR). Coiled-coil stretches lie at residues 70-177 (EENV…QSQR) and 201-280 (CVSL…TLNL). Positions 211-469 (LKEARKASGE…QAKLDTFLWS (259 aa)) are interaction with CYLD. Lysine 304 is covalently cross-linked (Glycyl lysine isopeptide (Lys-Gly) (interchain with G-Cter in SUMO2)). Residues 460–469 (QAKLDTFLWS) carry the PIP-box motif.

This sequence belongs to the TRAIP family. In terms of assembly, interacts (via PIP-box) with PCNA. Binds TRAF1, TRAF2, TRAF3, TRAF5 and TRAF6 is part of the receptor-TRAF signaling complex. May interact with CYLD; the C-terminus interacts with CYLD, however the interaction was not detected with the full-length protein. Interacts with POLK and POLN. Interacts with UIMC1. Post-translationally, sumoylated; sumoylation is required for nuclear localization. Sumoylation increases protein stability, possibly by preventing ubiquitination. Autoubiquitinated.

It is found in the nucleus. The protein resides in the nucleoplasm. The protein localises to the nucleolus. It localises to the chromosome. Its subcellular location is the cytoplasm. It is found in the perinuclear region. The catalysed reaction is S-ubiquitinyl-[E2 ubiquitin-conjugating enzyme]-L-cysteine + [acceptor protein]-L-lysine = [E2 ubiquitin-conjugating enzyme]-L-cysteine + N(6)-ubiquitinyl-[acceptor protein]-L-lysine.. Its pathway is protein modification; protein ubiquitination. Functionally, E3 ubiquitin ligase required to protect genome stability in response to replication stress. Acts as a key regulator of interstrand cross-link repair, which takes place when both strands of duplex DNA are covalently tethered together, thereby blocking replication and transcription. Controls the choice between the two pathways of replication-coupled interstrand-cross-link repair by mediating ubiquitination of MCM7 subunit of the CMG helicase complex. Short ubiquitin chains on MCM7 promote recruitment of DNA glycosylase NEIL3. If the interstrand cross-link cannot be cleaved by NEIL3, the ubiquitin chains continue to grow on MCM7, promoting the unloading of the CMG helicase complex by the VCP/p97 ATPase, enabling the Fanconi anemia DNA repair pathway. Only catalyzes ubiquitination of MCM7 when forks converge. Also involved in the repair of covalent DNA-protein cross-links (DPCs) during DNA synthesis: promotes ubiquitination of DPCs, leading to their degradation by the proteasome. Has also been proposed to play a role in promoting translesion synthesis by mediating the assembly of 'Lys-63'-linked poly-ubiquitin chains on the Y-family polymerase POLN in order to facilitate bypass of DNA lesions and preserve genomic integrity. The function in translesion synthesis is however controversial. Acts as a regulator of the spindle assembly checkpoint. Also acts as a negative regulator of innate immune signaling by inhibiting activation of NF-kappa-B mediated by TNF. Negatively regulates TLR3/4- and RIG-I-mediated IRF3 activation and subsequent IFNB1 production and cellular antiviral response by promoting 'Lys-48'-linked polyubiquitination of TNK1 leading to its proteasomal degradation. In Homo sapiens (Human), this protein is E3 ubiquitin-protein ligase TRAIP.